The sequence spans 317 residues: MVLKNLSLLIILFFSTSVFSVSNNLINIPITVVATATGADSKTLSDLKNINGLNLQIPAKCFTKGKLPFLASSDEVRFNCLRDALFDKSDNVVWSLRGGYGSARIIPDLLKLSKPNKEKFFIGYSDITALHLFLSQEWGWRTIHGSNIADLLKTEKDQGNFTKLGEILKGKVKQVTIDNLIPLNDIAKSSDLVKGNLTGGNLTMVQTSIGTRWQIKTKGKILFLEDTNVAPFRLDRELLHLKQSMLLEGVKAIIFGSFGKDLDATMLVLRNFAYSLNIPVFKTNRFGHERINDPIIYNTNSKIIMSKHKEFKLIMEL.

Catalysis depends on Ser125, which acts as the Nucleophile. Catalysis depends on charge relay system residues Glu225 and His288.

The protein belongs to the peptidase S66 family.

The polypeptide is Putative carboxypeptidase RP402 (Rickettsia prowazekii (strain Madrid E)).